The following is a 705-amino-acid chain: Probable E3 ubiquitin-protein ligase MID2 (705 aa).

The RING-type zinc-finger motif lies at 30–80 (CPICLELFEDPLLLPCAHSLCFSCAHRILVSSCSSGESIEPITAFQCPTCR). The segment at 137–184 (IACQFCEQDPPRDAVKTCITCEVSYCDRCLRATHPNKKPFTSHRLVEP) adopts a B box-type 1; degenerate zinc-finger fold. Residues 190–232 (LRGITCLDHENEKVNMYCVSDDQLICALCKLVGRHRDHQVASL) form a B box-type 2 zinc finger. Zn(2+) contacts are provided by Cys-195, His-198, Cys-218, and His-224. Residues 233–301 (NDRFEKLKQT…IIQQRKQMIA (69 aa)) are a coiled coil. The 60-residue stretch at 340–399 (LKENDQARFLQSAKNIAERVAMATASSQVLIPDINFNDAFENFALDFSREKKLLEGLDYL) folds into the COS domain. One can recognise a Fibronectin type-III domain in the interval 404 to 504 (PPSIREELCT…EPTRLKTNSQ (101 aa)). The B30.2/SPRY domain occupies 486–679 (INQAGSRNSE…ILSGLPAPDF (194 aa)).

It belongs to the TRIM/RBCC family. Homodimer or heterodimer with MID1. Interacts with IGBP1. Phosphorylated on serine and threonine residues. As to expression, low abundance in brain and lung, with even lower levels in heart, liver, and kidney.

The protein localises to the cytoplasm. It is found in the cytoskeleton. It carries out the reaction S-ubiquitinyl-[E2 ubiquitin-conjugating enzyme]-L-cysteine + [acceptor protein]-L-lysine = [E2 ubiquitin-conjugating enzyme]-L-cysteine + N(6)-ubiquitinyl-[acceptor protein]-L-lysine.. The protein operates within protein modification; protein ubiquitination. Its function is as follows. E3 ubiquitin ligase that plays a role in microtubule stabilization. Mediates the 'Lys-48'-linked polyubiquitination of LRRK2 to drive its localization to microtubules and its proteasomal degradation in neurons. This ubiquitination inhibits LRRK2 kinase activation by RAB29. The chain is Probable E3 ubiquitin-protein ligase MID2 (Mid2) from Mus musculus (Mouse).